The chain runs to 343 residues: MDPSGMMNEGGPFNLAEIWQFPLNGVSTAGDSSRRSFVGPNQFGDADLTTAANGDPARMSHALSQAVIEGISGAWKRREDESKSAKIVSTIGASEGENKRQKIDEVCDGKAEAESLGTETEQKKQQMEPTKDYIHVRARRGQATDSHSLAERARREKISERMKILQDLVPGCNKVIGKALVLDEIINYIQSLQRQVEFLSMKLEAVNSRMNPGIEVFPPKEVMILMIINSIFSIFFTKQYMFLSRYSRGRSLDVYAVRSFKHCNKRSDLCFCSCSPKTELKTTIFSQNMTCFCRYSRVGVAISSSKHCNEPVTLCFYSYCLRKIYHFLLWNLKYKIQKSVLFS.

In terms of domain architecture, bHLH spans Q142–L192.

Homodimer. In terms of tissue distribution, specifically expressed in flowers, mostly in petals, inflorescence and flower buds. Expressed ubiquitously (leaves, flowers and stems).

Its subcellular location is the nucleus. Functionally, involved in the control of petal size, by interfering with postmitotic cell expansion to limit final petal cell size. The protein is Transcription factor BPE (BPE) of Arabidopsis thaliana (Mouse-ear cress).